Here is a 273-residue protein sequence, read N- to C-terminus: Shikimate dehydrogenase (NADP(+)) (273 aa).

Residues 15–17 (SKS) and Thr-62 contribute to the shikimate site. Lys-66 serves as the catalytic Proton acceptor. Residue Asp-78 participates in NADP(+) binding. Positions 87 and 103 each coordinate shikimate. Residues 127–131 (GAGGA), 150–155 (NRTHTR), Ala-218, and Gly-238 each bind NADP(+).

This sequence belongs to the shikimate dehydrogenase family. Homodimer.

It carries out the reaction shikimate + NADP(+) = 3-dehydroshikimate + NADPH + H(+). It participates in metabolic intermediate biosynthesis; chorismate biosynthesis; chorismate from D-erythrose 4-phosphate and phosphoenolpyruvate: step 4/7. Involved in the biosynthesis of the chorismate, which leads to the biosynthesis of aromatic amino acids. Catalyzes the reversible NADPH linked reduction of 3-dehydroshikimate (DHSA) to yield shikimate (SA). The polypeptide is Shikimate dehydrogenase (NADP(+)) (Yersinia pseudotuberculosis serotype O:1b (strain IP 31758)).